A 295-amino-acid polypeptide reads, in one-letter code: ATP synthase subunit a (295 aa).

7 helical membrane passes run 41 to 61 (KWSALTLFVALFVGGFLWLGF), 101 to 121 (YLTILFCFILVSNVMAVIPVA), 129 to 149 (IALPMILAAVSWFIFNIVGIR), 161 to 181 (LVPAPTAPLFVKVILAPIEFV), 191 to 211 (LAIRLFANMFAGHMLLLVFAL), 222 to 242 (FVFGLVSGLMAIALTLFELMI), and 244 to 264 (VLQAYIFTVLTAAYIGGAISS).

Belongs to the ATPase A chain family. As to quaternary structure, F-type ATPases have 2 components, CF(1) - the catalytic core - and CF(0) - the membrane proton channel. CF(1) has five subunits: alpha(3), beta(3), gamma(1), delta(1), epsilon(1). CF(0) has three main subunits: a(1), b(2) and c(9-12). The alpha and beta chains form an alternating ring which encloses part of the gamma chain. CF(1) is attached to CF(0) by a central stalk formed by the gamma and epsilon chains, while a peripheral stalk is formed by the delta and b chains.

Its subcellular location is the cell membrane. Functionally, key component of the proton channel; it plays a direct role in the translocation of protons across the membrane. The protein is ATP synthase subunit a of Parafrankia sp. (strain EAN1pec).